The sequence spans 151 residues: Ribonuclease H (151 aa).

The RNase H type-1 domain maps to 1 to 143 (MEEYVIYTDG…VDRVARKEAA (143 aa)). 4 residues coordinate Mg(2+): aspartate 9, glutamate 48, aspartate 71, and aspartate 135.

It belongs to the RNase H family. As to quaternary structure, monomer. Mg(2+) serves as cofactor.

It is found in the cytoplasm. The catalysed reaction is Endonucleolytic cleavage to 5'-phosphomonoester.. Endonuclease that specifically degrades the RNA of RNA-DNA hybrids. The chain is Ribonuclease H from Neorickettsia sennetsu (strain ATCC VR-367 / Miyayama) (Ehrlichia sennetsu).